The chain runs to 2500 residues: Non-reducing polyketide synthase atr1 (2500 aa).

The N-terminal acylcarrier protein transacylase domain (SAT) stretch occupies residues 13 to 260; the sequence is VFSPQSKAPK…HNPENANLAL (248 aa). The Ketosynthase family 3 (KS3) domain occupies 385-808; it reads TDAVAVVGMA…GSNSAVLLCQ (424 aa). Catalysis depends on for beta-ketoacyl synthase activity residues cysteine 557, histidine 692, and histidine 731. Residues 908–1199 form a malonyl-CoA:ACP transacylase (MAT) domain region; sequence MTFSGQSRQS…EFPERHTFLD (292 aa). Catalysis depends on serine 995, which acts as the For acyl/malonyl transferase activity. Residues 1286–1413 are N-terminal hotdog fold; it reads PRLVEPRTKP…GDFGFTTQTQ (128 aa). Residues 1286–1584 enclose the PKS/mFAS DH domain; the sequence is PRLVEPRTKP…FTKLPITRLE (299 aa). The segment at 1287–1583 is product template (PT) domain; sequence RLVEPRTKPS…QFTKLPITRL (297 aa). Catalysis depends on histidine 1317, which acts as the Proton acceptor; for dehydratase activity. The segment at 1433 to 1584 is C-terminal hotdog fold; that stretch reads SETLKSKRAY…FTKLPITRLE (152 aa). Residue aspartate 1495 is the Proton donor; for dehydratase activity of the active site. The tract at residues 1594–1649 is disordered; the sequence is AHNTPILKSSQQDSIVSASSSSSTEHSDDDSEDDGSRSPSHSDTSVDSESEAPADN. Residues 1602–1617 show a composition bias toward low complexity; that stretch reads SSQQDSIVSASSSSST. A Carrier domain is found at 1649–1725; the sequence is NGAAKKLKSL…RIVAPEMAAK (77 aa). Position 1683 is an O-(pantetheine 4'-phosphoryl)serine (serine 1683). The tract at residues 2164-2496 is thioesterase (TE) domain; sequence KSYRIETMPY…YEFIFDVVGR (333 aa). Residues serine 2285 and aspartate 2434 each act as for thioesterase activity in the active site.

The enzyme catalyses 6 malonyl-CoA + 2 acetyl-CoA + 2 S-adenosyl-L-methionine + 3 H(+) = 4-O-demethylbarbatate + 2 S-adenosyl-L-homocysteine + 6 CO2 + 8 CoA + H2O. Its pathway is secondary metabolite biosynthesis; terpenoid biosynthesis. Its function is as follows. Non-reducing polyketide synthase; part of the gene cluster that mediates the biosynthesis of atranorin, a depside of polyketide origin that accumulates in the cortical or medullary layers of lichen thalli. The first step in the pathway is performed by the non-reducing polyketide synthase atr1 that produces 4-O-demethylbarbatic acid composed of two 3-methylorsellinic acid (3MOA) moieties from S-adenosyl-L-methionine (SAM), acetyl-CoA and malonyl-CoA units. The pathway continues with the actions of the cytochrome P450 monooygenase atr2 that catalizes the oxidation of c-9 and the O-methyltransferase atr3 that performs the methylation of the carboxyl group to yield atranorin, via the proatranorin II and III intermediates if atr2 acts first, or the proatranorin I intermediate if atr3 acts first. This Stereocaulon alpinum (Alpine snow lichen) protein is Non-reducing polyketide synthase atr1.